The primary structure comprises 23 residues: Dahlein-4.2 (23 aa).

In terms of tissue distribution, expressed by the skin dorsal glands.

Its subcellular location is the secreted. Has no antimicrobial activity. This chain is Dahlein-4.2, found in Ranoidea dahlii (Dahl's aquatic frog).